A 494-amino-acid chain; its full sequence is MTTTVPVKTKYEAIIGLETHCQLSTQTKIFSNSSTEFGATPNTNIDPICMGMPGVLPVLNEKVLEYAVKAGLALNCEIALYSKFDRKQYFYPDLPKNYQISQYDLPIAEHGWLEIEIVEEDGNATRKKIGITRLHMEEDAGKLVHGGSDRLSGSTYSMVDYNRAGVPLIEIVSEPDIRSGIEAAEYAQELRRIVRYLGVSDGNMQEGSLRCDVNVSVRPVGQKEFGTKVEIKNMNSFSAIQRAIEYEIERQTEAIETGEKIIQETRLWEEASQCTVSMRTKEGSSDYRYFPEPDIPPIEVSTQQLDTWKAELPELPAQKRYLYESKLGLSAYDTRVLTDDFNVAKYFEAAVAAGGNSKQVANWVMGDITAFLKNEKISINDITLKPDNLAELVTIIDDGTISGKIAKDILPELLSKGGSPKELVEKKGLIQISDIKAIEAIIDEVLAAHPEELAKYRGGKTKLKGFFVGQVMKKTQGRADPKMTNQLISKKLEG.

This sequence belongs to the GatB/GatE family. GatB subfamily. In terms of assembly, heterotrimer of A, B and C subunits.

The enzyme catalyses L-glutamyl-tRNA(Gln) + L-glutamine + ATP + H2O = L-glutaminyl-tRNA(Gln) + L-glutamate + ADP + phosphate + H(+). The catalysed reaction is L-aspartyl-tRNA(Asn) + L-glutamine + ATP + H2O = L-asparaginyl-tRNA(Asn) + L-glutamate + ADP + phosphate + 2 H(+). In terms of biological role, allows the formation of correctly charged Asn-tRNA(Asn) or Gln-tRNA(Gln) through the transamidation of misacylated Asp-tRNA(Asn) or Glu-tRNA(Gln) in organisms which lack either or both of asparaginyl-tRNA or glutaminyl-tRNA synthetases. The reaction takes place in the presence of glutamine and ATP through an activated phospho-Asp-tRNA(Asn) or phospho-Glu-tRNA(Gln). The sequence is that of Aspartyl/glutamyl-tRNA(Asn/Gln) amidotransferase subunit B from Trichodesmium erythraeum (strain IMS101).